Consider the following 602-residue polypeptide: Elongation factor 4 (602 aa).

Residues 6 to 188 (DHIRNFSIVA…AIVNKLPAPK (183 aa)) form the tr-type G domain. GTP contacts are provided by residues 18 to 23 (DHGKST) and 135 to 138 (NKID).

The protein belongs to the TRAFAC class translation factor GTPase superfamily. Classic translation factor GTPase family. LepA subfamily.

Its subcellular location is the cell inner membrane. The catalysed reaction is GTP + H2O = GDP + phosphate + H(+). In terms of biological role, required for accurate and efficient protein synthesis under certain stress conditions. May act as a fidelity factor of the translation reaction, by catalyzing a one-codon backward translocation of tRNAs on improperly translocated ribosomes. Back-translocation proceeds from a post-translocation (POST) complex to a pre-translocation (PRE) complex, thus giving elongation factor G a second chance to translocate the tRNAs correctly. Binds to ribosomes in a GTP-dependent manner. This Brucella melitensis biotype 2 (strain ATCC 23457) protein is Elongation factor 4.